Here is a 101-residue protein sequence, read N- to C-terminus: Small ribosomal subunit protein uS14 (101 aa).

The span at 1–10 shows a compositional bias: basic and acidic residues; the sequence is MAKKSSIEKN. The disordered stretch occupies residues 1–23; that stretch reads MAKKSSIEKNNRRRKMTKNAAPK. The span at 11 to 23 shows a compositional bias: basic residues; that stretch reads NRRRKMTKNAAPK.

It belongs to the universal ribosomal protein uS14 family. As to quaternary structure, part of the 30S ribosomal subunit. Contacts proteins S3 and S10.

Binds 16S rRNA, required for the assembly of 30S particles and may also be responsible for determining the conformation of the 16S rRNA at the A site. The chain is Small ribosomal subunit protein uS14 from Rhodopseudomonas palustris (strain BisB5).